We begin with the raw amino-acid sequence, 203 residues long: 5-formyltetrahydrofolate cyclo-ligase (203 aa).

Position 2 is an N-acetylalanine (A2). Residues 10 to 14 and R14 each bind ATP; that span reads KRGLR. Substrate contacts are provided by residues L56, E61, and 148–152; that span reads RGKGY. Residue 145 to 153 coordinates ATP; it reads RLGRGKGYY. Residues D154 and D189 each contribute to the Mg(2+) site.

Belongs to the 5-formyltetrahydrofolate cyclo-ligase family. Monomer. Mg(2+) serves as cofactor.

Its subcellular location is the cytoplasm. The enzyme catalyses (6S)-5-formyl-5,6,7,8-tetrahydrofolate + ATP = (6R)-5,10-methenyltetrahydrofolate + ADP + phosphate. Contributes to tetrahydrofolate metabolism. Helps regulate carbon flow through the folate-dependent one-carbon metabolic network that supplies carbon for the biosynthesis of purines, thymidine and amino acids. Catalyzes the irreversible conversion of 5-formyltetrahydrofolate (5-CHO-H(4)PteGlu) to yield 5,10-methenyltetrahydrofolate. This Mus musculus (Mouse) protein is 5-formyltetrahydrofolate cyclo-ligase (Mthfs).